Here is a 438-residue protein sequence, read N- to C-terminus: 3-phosphoshikimate 1-carboxyvinyltransferase (438 aa).

3-phosphoshikimate is bound by residues lysine 21, serine 22, and arginine 26. Residue lysine 21 participates in phosphoenolpyruvate binding. Phosphoenolpyruvate is bound by residues glycine 93 and arginine 121. The 3-phosphoshikimate site is built by serine 166, serine 167, glutamine 168, serine 194, aspartate 324, and lysine 351. Glutamine 168 contacts phosphoenolpyruvate. Catalysis depends on aspartate 324, which acts as the Proton acceptor. Phosphoenolpyruvate-binding residues include arginine 355 and arginine 395.

It belongs to the EPSP synthase family. As to quaternary structure, monomer.

The protein localises to the cytoplasm. The catalysed reaction is 3-phosphoshikimate + phosphoenolpyruvate = 5-O-(1-carboxyvinyl)-3-phosphoshikimate + phosphate. Its pathway is metabolic intermediate biosynthesis; chorismate biosynthesis. Functionally, catalyzes the transfer of the enolpyruvyl moiety of phosphoenolpyruvate (PEP) to the 5-hydroxyl of shikimate-3-phosphate (S3P) to produce enolpyruvyl shikimate-3-phosphate and inorganic phosphate. The polypeptide is 3-phosphoshikimate 1-carboxyvinyltransferase (Methanobrevibacter smithii (strain ATCC 35061 / DSM 861 / OCM 144 / PS)).